Here is a 117-residue protein sequence, read N- to C-terminus: Large ribosomal subunit protein uL18 (117 aa).

This sequence belongs to the universal ribosomal protein uL18 family. Part of the 50S ribosomal subunit; part of the 5S rRNA/L5/L18/L25 subcomplex. Contacts the 5S and 23S rRNAs.

Functionally, this is one of the proteins that bind and probably mediate the attachment of the 5S RNA into the large ribosomal subunit, where it forms part of the central protuberance. This chain is Large ribosomal subunit protein uL18, found in Phytoplasma australiense.